Consider the following 280-residue polypeptide: Clathrin adapter accessory protein LAA2 (280 aa).

Positions 1–26 (MSDRDQIEPVTNALDAESDSSDDFGN) are disordered. The Ear-binding motif signature appears at 19–30 (DSSDDFGNFSDA).

As to quaternary structure, interacts with the clathrin-associated adapter complex AP-1. Interacts with LAA1.

The protein localises to the cytoplasmic vesicle. It is found in the clathrin-coated vesicle. In terms of biological role, involved in localization of clathrin-associated adapter complex (AP-1) and subsequent AP-1-mediated clathrin-coated vesicle cargo loading. Directly mediates the interaction between LAA1 and AP-1 which is required for AP-1 localization. In complex with LAA1, cooperates with the small GTPase ARF1 and the phosphatidyl-inositol-4-phosphate (PI4P) synthesis to confer temporal specificity to AP-1 recruitment. The sequence is that of Clathrin adapter accessory protein LAA2 from Saccharomyces cerevisiae (strain ATCC 204508 / S288c) (Baker's yeast).